The sequence spans 757 residues: 5-methyltetrahydropteroyltriglutamate--homocysteine methyltransferase (757 aa).

Residues 16–19 (RELK) and K112 each bind 5-methyltetrahydropteroyltri-L-glutamate. L-homocysteine-binding positions include 433 to 435 (IGS) and E486. Residues 433–435 (IGS) and E486 contribute to the L-methionine site. 5-methyltetrahydropteroyltri-L-glutamate-binding positions include 517–518 (RC) and W563. An L-homocysteine-binding site is contributed by D601. Residue D601 coordinates L-methionine. Residue E607 coordinates 5-methyltetrahydropteroyltri-L-glutamate. 3 residues coordinate Zn(2+): H643, C645, and E667. H696 (proton donor) is an active-site residue. Residue C728 coordinates Zn(2+).

It belongs to the vitamin-B12 independent methionine synthase family. Requires Zn(2+) as cofactor.

The enzyme catalyses 5-methyltetrahydropteroyltri-L-glutamate + L-homocysteine = tetrahydropteroyltri-L-glutamate + L-methionine. It participates in amino-acid biosynthesis; L-methionine biosynthesis via de novo pathway; L-methionine from L-homocysteine (MetE route): step 1/1. Functionally, catalyzes the transfer of a methyl group from 5-methyltetrahydrofolate to homocysteine resulting in methionine formation. The polypeptide is 5-methyltetrahydropteroyltriglutamate--homocysteine methyltransferase (Histophilus somni (strain 2336) (Haemophilus somnus)).